We begin with the raw amino-acid sequence, 142 residues long: Pleckstrin homology-like domain family A member 2 (142 aa).

At Ser-3 the chain carries Phosphoserine. The PH domain occupies 7–99 (VLREGELEKR…WNASITLALI (93 aa)).

The protein belongs to the PHLDA2 family.

Its subcellular location is the cytoplasm. The protein localises to the membrane. Functionally, plays a role in regulating placenta growth. May act via its PH domain that competes with other PH domain-containing proteins, thereby preventing their binding to membrane lipids. The polypeptide is Pleckstrin homology-like domain family A member 2 (PHLDA2) (Bos taurus (Bovine)).